Reading from the N-terminus, the 155-residue chain is MQIKQIEGSLSAKDIRFALVVSRFNDFIGQKLVEGAIDCILRHGGSEEQITVYRCPGAFELPMVAKKVAMSGSADAVIALGVIIRGSTPHFDVIAAEATKGIAQVSLDTMIPVSFGVLTTENLEQAIERAGTKAGNKGFDAAMTAMEMVNLYRQF.

Residues Phe-24, 58-60 (AFE), and 82-84 (VII) contribute to the 5-amino-6-(D-ribitylamino)uracil site. Position 87–88 (87–88 (ST)) interacts with (2S)-2-hydroxy-3-oxobutyl phosphate. The Proton donor role is filled by His-90. Residue Phe-115 coordinates 5-amino-6-(D-ribitylamino)uracil. (2S)-2-hydroxy-3-oxobutyl phosphate is bound at residue Arg-129.

The protein belongs to the DMRL synthase family.

It catalyses the reaction (2S)-2-hydroxy-3-oxobutyl phosphate + 5-amino-6-(D-ribitylamino)uracil = 6,7-dimethyl-8-(1-D-ribityl)lumazine + phosphate + 2 H2O + H(+). It participates in cofactor biosynthesis; riboflavin biosynthesis; riboflavin from 2-hydroxy-3-oxobutyl phosphate and 5-amino-6-(D-ribitylamino)uracil: step 1/2. In terms of biological role, catalyzes the formation of 6,7-dimethyl-8-ribityllumazine by condensation of 5-amino-6-(D-ribitylamino)uracil with 3,4-dihydroxy-2-butanone 4-phosphate. This is the penultimate step in the biosynthesis of riboflavin. This is 6,7-dimethyl-8-ribityllumazine synthase from Chlorobium limicola (strain DSM 245 / NBRC 103803 / 6330).